The primary structure comprises 274 residues: Pantothenate synthetase (274 aa).

An ATP-binding site is contributed by 27 to 34; the sequence is MGALHKGH. H34 functions as the Proton donor in the catalytic mechanism. Q58 serves as a coordination point for (R)-pantoate. Q58 provides a ligand contact to beta-alanine. 145–148 is an ATP binding site; that stretch reads GQKD. Q151 serves as a coordination point for (R)-pantoate. 182–185 contacts ATP; the sequence is LSSR.

Belongs to the pantothenate synthetase family. As to quaternary structure, homodimer.

Its subcellular location is the cytoplasm. The enzyme catalyses (R)-pantoate + beta-alanine + ATP = (R)-pantothenate + AMP + diphosphate + H(+). It functions in the pathway cofactor biosynthesis; (R)-pantothenate biosynthesis; (R)-pantothenate from (R)-pantoate and beta-alanine: step 1/1. In terms of biological role, catalyzes the condensation of pantoate with beta-alanine in an ATP-dependent reaction via a pantoyl-adenylate intermediate. The protein is Pantothenate synthetase of Wolinella succinogenes (strain ATCC 29543 / DSM 1740 / CCUG 13145 / JCM 31913 / LMG 7466 / NCTC 11488 / FDC 602W) (Vibrio succinogenes).